Consider the following 421-residue polypeptide: Phosphatidylinositol 5-phosphate 4-kinase type-2 gamma (421 aa).

The residue at position 2 (Ala-2) is an N-acetylalanine. Ser-26 carries the phosphoserine modification. One can recognise a PIPK domain in the interval 43–420 (AADPLVGVFL…RFLDFIANIF (378 aa)). Residues 69 to 75 (VMLLPDD) are required for interaction with PIP5K1A. Residue Ser-349 is modified to Phosphoserine.

Interacts with PIP5K1A; the interaction inhibits PIP5K1A kinase activity. In terms of processing, phosphorylated, phosphorylation is induced by EGF.

The protein resides in the endoplasmic reticulum. Its subcellular location is the cytoplasm. The catalysed reaction is a 1,2-diacyl-sn-glycero-3-phospho-(1D-myo-inositol-5-phosphate) + ATP = a 1,2-diacyl-sn-glycero-3-phospho-(1D-myo-inositol-4,5-bisphosphate) + ADP + H(+). It catalyses the reaction 1,2-dihexadecanoyl-sn-glycero-3-phospho-(1D-myo-inositol-5-phosphate) + ATP = 1,2-dihexadecanoyl-sn-glycero-3-phospho-(1D-myo-inositol-4,5-bisphosphate) + ADP + H(+). The enzyme catalyses 1,2-dihexadecanoyl-sn-glycero-3-phospho-(1D-myo-inositol-5-phosphate) + GTP = 1,2-dihexadecanoyl-sn-glycero-3-phospho-(1D-myo-inositol-4,5-bisphosphate) + GDP + H(+). In terms of biological role, phosphatidylinositol 5-phosphate 4-kinase with low enzymatic activity. May be a GTP sensor, has higher GTP-dependent kinase activity than ATP-dependent kinase activity. PIP4Ks negatively regulate insulin signaling through a catalytic-independent mechanism. They interact with PIP5Ks and suppress PIP5K-mediated PtdIns(4,5)P2 synthesis and insulin-dependent conversion to PtdIns(3,4,5)P3. The chain is Phosphatidylinositol 5-phosphate 4-kinase type-2 gamma from Mus musculus (Mouse).